An 85-amino-acid chain; its full sequence is Small ribosomal subunit protein bS20 (85 aa).

The protein belongs to the bacterial ribosomal protein bS20 family.

Binds directly to 16S ribosomal RNA. In Borrelia hermsii (strain HS1 / DAH), this protein is Small ribosomal subunit protein bS20.